The chain runs to 260 residues: Alpha carbonic anhydrase 6 (260 aa).

A signal peptide spans 1-28 (MDANTKTILFFVVFFIDLFSPNILFVYA). The 226-residue stretch at 35 to 260 (PLFTYKQKTE…FVFVFWCMLM (226 aa)) folds into the Alpha-carbonic anhydrase domain. A disulfide bridge links cysteine 60 with cysteine 215. Histidine 100 acts as the Proton acceptor in catalysis. Residues histidine 126 and histidine 128 each contribute to the Zn(2+) site. Asparagine 136 is a glycosylation site (N-linked (GlcNAc...) asparagine). Histidine 145 provides a ligand contact to Zn(2+). 211-212 (TI) contributes to the substrate binding site.

The protein belongs to the alpha-class carbonic anhydrase family. Zn(2+) is required as a cofactor. Post-translationally, N-glycosylated.

It is found in the plastid. The protein resides in the chloroplast stroma. It catalyses the reaction hydrogencarbonate + H(+) = CO2 + H2O. Reversible hydration of carbon dioxide. This is Alpha carbonic anhydrase 6 (ACA6) from Arabidopsis thaliana (Mouse-ear cress).